The chain runs to 335 residues: Biotin synthase (335 aa).

Residues 46-274 (YNIQLASLFS…KSKIRLSAGR (229 aa)) form the Radical SAM core domain. 3 residues coordinate [4Fe-4S] cluster: Cys61, Cys65, and Cys68. Positions 105, 137, 197, and 269 each coordinate [2Fe-2S] cluster.

This sequence belongs to the radical SAM superfamily. Biotin synthase family. Homodimer. It depends on [4Fe-4S] cluster as a cofactor. The cofactor is [2Fe-2S] cluster.

It carries out the reaction (4R,5S)-dethiobiotin + (sulfur carrier)-SH + 2 reduced [2Fe-2S]-[ferredoxin] + 2 S-adenosyl-L-methionine = (sulfur carrier)-H + biotin + 2 5'-deoxyadenosine + 2 L-methionine + 2 oxidized [2Fe-2S]-[ferredoxin]. It functions in the pathway cofactor biosynthesis; biotin biosynthesis; biotin from 7,8-diaminononanoate: step 2/2. Functionally, catalyzes the conversion of dethiobiotin (DTB) to biotin by the insertion of a sulfur atom into dethiobiotin via a radical-based mechanism. This is Biotin synthase from Prochlorococcus marinus (strain AS9601).